We begin with the raw amino-acid sequence, 459 residues long: Ribulose bisphosphate carboxylase (459 aa).

Residue N111 coordinates substrate. K166 (proton acceptor) is an active-site residue. Residue K168 participates in substrate binding. K191, D193, and E194 together coordinate Mg(2+). The residue at position 191 (K191) is an N6-carboxylysine. The active-site Proton acceptor is the H287. 3 residues coordinate substrate: R288, H321, and S368.

It belongs to the RuBisCO large chain family. Type II subfamily. In terms of assembly, the complex is approximately 350 kDa when isolated from either T.denitrificans or R.sphaeroides, suggesting a homohexamer or homooctamer structure. Mg(2+) is required as a cofactor.

The enzyme catalyses 2 (2R)-3-phosphoglycerate + 2 H(+) = D-ribulose 1,5-bisphosphate + CO2 + H2O. It carries out the reaction D-ribulose 1,5-bisphosphate + O2 = 2-phosphoglycolate + (2R)-3-phosphoglycerate + 2 H(+). Functionally, ruBisCO catalyzes two reactions: the carboxylation of D-ribulose 1,5-bisphosphate, the primary event in carbon dioxide fixation, as well as the oxidative fragmentation of the pentose substrate. Both reactions occur simultaneously and in competition at the same active site. The sequence is that of Ribulose bisphosphate carboxylase (cbbM) from Thiobacillus denitrificans (strain ATCC 25259 / T1).